Reading from the N-terminus, the 341-residue chain is 4-hydroxy-2-oxovalerate aldolase (341 aa).

The Pyruvate carboxyltransferase domain occupies 5 to 257 (ITLHDMTLRD…ETGVDVFRIA (253 aa)). 13–14 (RD) contributes to the substrate binding site. Asp14 is a Mn(2+) binding site. The active-site Proton acceptor is His17. Residues Ser167 and His196 each coordinate substrate. The Mn(2+) site is built by His196 and His198. Residue Tyr287 participates in substrate binding.

The protein belongs to the 4-hydroxy-2-oxovalerate aldolase family.

The enzyme catalyses (S)-4-hydroxy-2-oxopentanoate = acetaldehyde + pyruvate. The polypeptide is 4-hydroxy-2-oxovalerate aldolase (mhpE) (Cupriavidus taiwanensis (strain DSM 17343 / BCRC 17206 / CCUG 44338 / CIP 107171 / LMG 19424 / R1) (Ralstonia taiwanensis (strain LMG 19424))).